The following is a 286-amino-acid chain: Fructose-bisphosphate aldolase (286 aa).

Ser-50 is a binding site for D-glyceraldehyde 3-phosphate. The Proton donor role is filled by Asp-85. Residues His-86, Asp-107, Glu-137, and His-181 each contribute to the Zn(2+) site. Gly-182 serves as a coordination point for dihydroxyacetone phosphate. A Zn(2+)-binding site is contributed by His-209. Residues 210–212 and 231–234 contribute to the dihydroxyacetone phosphate site; these read GGT and NVNT.

This sequence belongs to the class II fructose-bisphosphate aldolase family. It depends on Zn(2+) as a cofactor.

The enzyme catalyses beta-D-fructose 1,6-bisphosphate = D-glyceraldehyde 3-phosphate + dihydroxyacetone phosphate. It functions in the pathway carbohydrate degradation; glycolysis; D-glyceraldehyde 3-phosphate and glycerone phosphate from D-glucose: step 4/4. In terms of biological role, catalyzes the aldol condensation of dihydroxyacetone phosphate (DHAP or glycerone-phosphate) with glyceraldehyde 3-phosphate (G3P) to form fructose 1,6-bisphosphate (FBP) in gluconeogenesis and the reverse reaction in glycolysis. This chain is Fructose-bisphosphate aldolase (fba), found in Staphylococcus epidermidis (strain ATCC 35984 / DSM 28319 / BCRC 17069 / CCUG 31568 / BM 3577 / RP62A).